The primary structure comprises 185 residues: Peptidyl-tRNA hydrolase (185 aa).

Tyr-14 lines the tRNA pocket. His-19 acts as the Proton acceptor in catalysis. Residues Tyr-65, Asn-67, and Asn-113 each contribute to the tRNA site.

The protein belongs to the PTH family. As to quaternary structure, monomer.

It is found in the cytoplasm. The enzyme catalyses an N-acyl-L-alpha-aminoacyl-tRNA + H2O = an N-acyl-L-amino acid + a tRNA + H(+). Its function is as follows. Hydrolyzes ribosome-free peptidyl-tRNAs (with 1 or more amino acids incorporated), which drop off the ribosome during protein synthesis, or as a result of ribosome stalling. Catalyzes the release of premature peptidyl moieties from peptidyl-tRNA molecules trapped in stalled 50S ribosomal subunits, and thus maintains levels of free tRNAs and 50S ribosomes. This chain is Peptidyl-tRNA hydrolase, found in Rickettsia bellii (strain RML369-C).